Reading from the N-terminus, the 476-residue chain is Ribulose bisphosphate carboxylase/oxygenase activase 1, chloroplastic (476 aa).

The N-terminal 56 residues, 1–56, are a transit peptide targeting the chloroplast; that stretch reads MAAAYSTVGAVNRAPLSLNGSGARASLVPSTAFFGSSLKKSAAKFPKASSGNFKIV. 165–172 contributes to the ATP binding site; the sequence is GGKGQGKS.

This sequence belongs to the RuBisCO activase family.

The protein localises to the plastid. It is found in the chloroplast stroma. In terms of biological role, activation of RuBisCO (ribulose-1,5-bisphosphate carboxylase/oxygenase; EC 4.1.1.39) involves the ATP-dependent carboxylation of the epsilon-amino group of lysine leading to a carbamate structure. The sequence is that of Ribulose bisphosphate carboxylase/oxygenase activase 1, chloroplastic (RCA1) from Larrea tridentata (Creosote bush).